Consider the following 402-residue polypeptide: MDRTETRFRKRGQITGKITTSRQPHPQNEQSPQRSTSGYPLQEVVDDEMLGPSAPGVDPSPPCRSLGWKRKREWSDESEEEPEKELAPEPEETWVVEMLCGLKMKLKQQRVSPILPEHHKDFNSQLAPGVDPSPPHRSFCWKRKMEWWDESEESLEEEPRKVLAPEPEEIWVAEMLCGLKMKLKRRRVSLVLPEHHEAFNRLLEDPVIKRFLAWDKDLRVSDKYLLAMVIAYFSRAGFPSWQYQRIHFFLALYLANDMEEDDEDSKQNIFHFLYRKNRSRIPLLRKPWFQLGHSMNPRARKNRSRIPLLRKRRFQLYRSTNPRARKNRSRIPLLRKRRFQLYRSMNSRARKNRSQIVLFQKRRFHFFCSMSCRAWVSPEELEEIQAYDPEHWVWARDRAHLS.

Residues 1–89 (MDRTETRFRK…EEPEKELAPE (89 aa)) are disordered. Residues 16–39 (GKITTSRQPHPQNEQSPQRSTSGY) show a composition bias toward polar residues. Residues 76-89 (DESEEEPEKELAPE) are compositionally biased toward acidic residues.

Belongs to the Speedy/Ringo family.

In Homo sapiens (Human), this protein is Speedy protein E2 (SPDYE2).